Here is a 21-residue protein sequence, read N- to C-terminus: Protein YnfR (21 aa).

This Escherichia coli (strain K12) protein is Protein YnfR.